Consider the following 298-residue polypeptide: Protein Bel-1 (298 aa).

A compositionally biased stretch (basic and acidic residues) spans 1–17; that stretch reads MASWEKEKELAHLHQPE. The disordered stretch occupies residues 1-46; sequence MASWEKEKELAHLHQPEDDPLPDLSLLLDMDQFEPTEGPDSNPGAE. The DNA-binding element occupies 91–200; the sequence is SKWACARLIL…GEPLKPRVRA (110 aa). Residues 214-223 carry the Nuclear localization signal motif; sequence ADRPKRSRWG. The segment at 225 to 298 is transactivation domain; it reads APREQPNTSS…SGPPTGPSEN (74 aa).

Homodimer or homomultimer. Forms complexes with the host nuclear factors NFIA, NFIB, NFIC or NFIX.

It is found in the host nucleus. Its function is as follows. Transcriptional transactivator that activates the viral internal promoter (IP), thereby enhancing its own expression. This transactivation is repressed by nuclear factor I. Also transactivates the long terminal repeat (LTR) promoter, thereby inducing structural gene expression, initiating the late phase of infection. It is therefore a key regulator of viral gene expression. It directly binds to and activates DNA target sites of viral promoters and those of distinct cellular genes. Required for viral replication. The sequence is that of Protein Bel-1 (bel1) from Chlorocebus aethiops (Green monkey).